A 643-amino-acid chain; its full sequence is Transducer protein Htr8 (643 aa).

Helical transmembrane passes span 48 to 68, 79 to 99, 115 to 134, 149 to 169, and 184 to 204; these read VFVL…GTES, PGIL…LASI, VLAS…EAHF, WLPF…FGMI, and PWVW…ALMA. Residues 273 to 326 form the HAMP domain; that stretch reads ERLEATANTYGAAMARAADGDLSVRLDPDVENDAMAAIAASFNEMLDETETTIR. The region spanning 345-581 is the Methyl-accepting transducer domain; the sequence is GVVEIEDASG…EAVSMIAEVS (237 aa).

It belongs to the methyl-accepting chemotaxis (MCP) protein family. In terms of processing, methylated by CheR.

It localises to the cell membrane. Functionally, potentially involved in chemo- or phototactic signal transduction. The sequence is that of Transducer protein Htr8 (htr8) from Halobacterium salinarum (strain ATCC 29341 / DSM 671 / R1).